The chain runs to 403 residues: Imidazolonepropionase (403 aa).

2 residues coordinate Fe(3+): His-69 and His-71. The Zn(2+) site is built by His-69 and His-71. Positions 78, 141, and 174 each coordinate 4-imidazolone-5-propanoate. Residue Tyr-141 participates in N-formimidoyl-L-glutamate binding. Fe(3+) is bound at residue His-239. His-239 is a Zn(2+) binding site. Gln-242 contacts 4-imidazolone-5-propanoate. Asp-314 is a binding site for Fe(3+). Residue Asp-314 coordinates Zn(2+). 2 residues coordinate N-formimidoyl-L-glutamate: Asn-316 and Gly-318. Ser-319 is a 4-imidazolone-5-propanoate binding site.

It belongs to the metallo-dependent hydrolases superfamily. HutI family. The cofactor is Zn(2+). It depends on Fe(3+) as a cofactor.

The protein resides in the cytoplasm. The enzyme catalyses 4-imidazolone-5-propanoate + H2O = N-formimidoyl-L-glutamate. Its pathway is amino-acid degradation; L-histidine degradation into L-glutamate; N-formimidoyl-L-glutamate from L-histidine: step 3/3. Its function is as follows. Catalyzes the hydrolytic cleavage of the carbon-nitrogen bond in imidazolone-5-propanoate to yield N-formimidoyl-L-glutamate. It is the third step in the universal histidine degradation pathway. The polypeptide is Imidazolonepropionase (Legionella pneumophila (strain Lens)).